Reading from the N-terminus, the 365-residue chain is S-adenosylmethionine:tRNA ribosyltransferase-isomerase (365 aa).

This sequence belongs to the QueA family. Monomer.

The protein localises to the cytoplasm. It carries out the reaction 7-aminomethyl-7-carbaguanosine(34) in tRNA + S-adenosyl-L-methionine = epoxyqueuosine(34) in tRNA + adenine + L-methionine + 2 H(+). It participates in tRNA modification; tRNA-queuosine biosynthesis. Its function is as follows. Transfers and isomerizes the ribose moiety from AdoMet to the 7-aminomethyl group of 7-deazaguanine (preQ1-tRNA) to give epoxyqueuosine (oQ-tRNA). This is S-adenosylmethionine:tRNA ribosyltransferase-isomerase from Rickettsia africae (strain ESF-5).